A 327-amino-acid polypeptide reads, in one-letter code: Phenylalanine--tRNA ligase alpha subunit (327 aa).

Glu252 is a binding site for Mg(2+).

Belongs to the class-II aminoacyl-tRNA synthetase family. Phe-tRNA synthetase alpha subunit type 1 subfamily. As to quaternary structure, tetramer of two alpha and two beta subunits. The cofactor is Mg(2+).

It localises to the cytoplasm. It catalyses the reaction tRNA(Phe) + L-phenylalanine + ATP = L-phenylalanyl-tRNA(Phe) + AMP + diphosphate + H(+). The sequence is that of Phenylalanine--tRNA ligase alpha subunit from Vibrio campbellii (strain ATCC BAA-1116).